The chain runs to 3336 residues: Pericentrin (3336 aa).

Disordered regions lie at residues 1–71 (MEVE…DICK) and 81–100 (GAGG…KRED). Residues 27 to 37 (TKGDSSHSEKK) show a composition bias toward basic and acidic residues. A Phosphoserine modification is found at Ser-44. Ser-188 is modified (phosphoserine). At Thr-191 the chain carries Phosphothreonine. Positions 258-553 (HTAQLELTQA…RLQGAREDAL (296 aa)) form a coiled coil. The tract at residues 569 to 589 (KPEKGRKDHVDELEPERHKES) is disordered. Ser-610 and Ser-682 each carry phosphoserine. 2 coiled-coil regions span residues 675 to 835 (TEHK…DALH) and 1010 to 1146 (TILT…MLKA). Ser-1245 is subject to Phosphoserine. Residues 1299–1949 (NEETAQVVRK…FLRCQVELDR (651 aa)) adopt a coiled-coil conformation. The interval 1619–1638 (TLDAGRCPEPPSGSPPEGPE) is disordered. The span at 1626 to 1636 (PEPPSGSPPEG) shows a compositional bias: pro residues. Residues Ser-1653 and Ser-1712 each carry the phosphoserine modification. A disordered region spans residues 1954–1974 (RATAHTRVPGAHPQPRMDGGA). Ser-2044 is modified (phosphoserine). A coiled-coil region spans residues 2064–2082 (VDLVAQVKQLQEKLNRLLY). A disordered region spans residues 2168 to 2214 (SLIPDEMPDSPIQEKSECQDMSLSSPTSVLGGSRHQSHTAEAGPRKS). Ser-2177, Ser-2192, Ser-2225, Ser-2226, and Ser-2327 each carry phosphoserine. Residues 2186-2197 (QDMSLSSPTSVL) show a composition bias toward polar residues. The segment at 2318 to 2374 (SFDSQETLSSPPPGLEGKADRSEKSDGSGFGARLSPGSGGPEAQTAGPVTPASISGR) is disordered. Residues 2334–2343 (GKADRSEKSD) show a composition bias toward basic and acidic residues. Ser-2352, Ser-2355, Ser-2477, and Ser-2486 each carry phosphoserine. Residues 2536-3086 (QEKLQHLRTA…EKLLKHHLQK (551 aa)) adopt a coiled-coil conformation. 2 disordered regions span residues 2875–2910 (LEQS…WRKW) and 3084–3126 (LQKG…EEAH). Basic and acidic residues-rich tracts occupy residues 2876-2896 (EQSH…RSAE) and 3092-3102 (RSERSAWKPDE). An interaction with NEK2 region spans residues 2983 to 3246 (LSAARLLTSF…ARQPQSPPRT (264 aa)). A calmodulin-binding region spans residues 3195-3208 (RFRTAVRVVIAILR). The interval 3224-3300 (ALAQGKAPRP…RSLTASQDPE (77 aa)) is disordered. Low complexity predominate over residues 3226-3240 (AQGKAPRPGPRARQP). Residues 3283–3297 (PSPNSRLERSLTASQ) show a composition bias toward polar residues. The residue at position 3302 (Ser-3302) is a Phosphoserine.

In terms of assembly, interacts with CHD3. Interacts with CHD4; the interaction regulates centrosome integrity. Interacts with DISC1 and PCM1. Binds calmodulin. Interacts with CDK5RAP2; the interaction is leading to centrosomal localization of PCNT and CDK5RAP2. Interacts with isoform 1 of NEK2. Interacts with CEP131. Interacts with CCDC13. Interacts with CEP68. Interacts with ATF5; the ATF5:PCNT:polyglutamylated tubulin (PGT) tripartite unites the mother centriole and the pericentriolar material (PCM) in the centrosome. In terms of processing, cleaved during mitotis which leads to removal of CDK5RAP2 from the centrosome and promotes centriole disengagement and subsequent centriole separation. The C-terminal fragment is rapidly degraded following cleavage. Ubiquitinated by TRIM43; leading to proteasomal degradation. Expressed in all tissues tested, including placenta, liver, kidney and thymus.

The protein localises to the cytoplasm. Its subcellular location is the cytoskeleton. It is found in the microtubule organizing center. It localises to the centrosome. In terms of biological role, integral component of the filamentous matrix of the centrosome involved in the initial establishment of organized microtubule arrays in both mitosis and meiosis. Plays a role, together with DISC1, in the microtubule network formation. Is an integral component of the pericentriolar material (PCM). May play an important role in preventing premature centrosome splitting during interphase by inhibiting NEK2 kinase activity at the centrosome. The sequence is that of Pericentrin (PCNT) from Homo sapiens (Human).